Reading from the N-terminus, the 557-residue chain is ETHYLENE INSENSITIVE 3-like 5 protein (557 aa).

Disordered regions lie at residues M1–E23 and N61–M96. The span at S64–S82 shows a compositional bias: low complexity. A coiled-coil region spans residues E270 to S311.

This sequence belongs to the EIN3 family.

The protein resides in the nucleus. In terms of biological role, putative transcription factor that may be involved in the ethylene response pathway. This Arabidopsis thaliana (Mouse-ear cress) protein is ETHYLENE INSENSITIVE 3-like 5 protein (EIL5).